The sequence spans 311 residues: Formimidoylglutamase (311 aa).

6 residues coordinate Mn(2+): His-130, Asp-155, His-157, Asp-159, Cys-242, and Asp-244.

Belongs to the arginase family. The cofactor is Mn(2+).

The catalysed reaction is N-formimidoyl-L-glutamate + H2O = formamide + L-glutamate. The protein operates within amino-acid degradation; L-histidine degradation into L-glutamate; L-glutamate from N-formimidoyl-L-glutamate (hydrolase route): step 1/1. Its function is as follows. Catalyzes the conversion of N-formimidoyl-L-glutamate to L-glutamate and formamide. This is Formimidoylglutamase from Staphylococcus aureus (strain Mu3 / ATCC 700698).